We begin with the raw amino-acid sequence, 1098 residues long: Protein diaphanous homolog 2 (1098 aa).

Methionine 1 is subject to N-acetylmethionine. The segment at methionine 1–glutamate 62 is disordered. Basic and acidic residues predominate over residues alanine 36 to threonine 52. One can recognise a GBD/FH3 domain in the interval serine 90–aspartate 463. 2 coiled-coil regions span residues glutamine 375–lysine 416 and glutamate 490–valine 539. 5 disordered regions span residues glutamine 537 to proline 565, proline 578 to proline 611, methionine 679 to lysine 699, histidine 1007 to glycine 1047, and glycine 1063 to lysine 1098. Composition is skewed to pro residues over residues isoleucine 543–proline 565 and proline 578–glycine 608. In terms of domain architecture, FH1 spans proline 544–proline 620. Positions glutamine 625 to lysine 1025 constitute an FH2 domain. Residues phenylalanine 999–threonine 1050 are a coiled coil. Composition is skewed to basic and acidic residues over residues histidine 1007–glutamate 1032 and arginine 1075–serine 1087. Residues aspartate 1048–aspartate 1078 enclose the DAD domain.

It belongs to the formin homology family. Diaphanous subfamily. Interacts with MAPRE1 and APC.

In terms of biological role, may be involved in oogenesis. This Mus musculus (Mouse) protein is Protein diaphanous homolog 2 (Diaph2).